A 247-amino-acid polypeptide reads, in one-letter code: Chymase (247 aa).

An N-terminal signal peptide occupies residues 1–17 (MCLLSLPLLLFLQYTRA). A propeptide spans 18–21 (KAGE) (activation peptide). In terms of domain architecture, Peptidase S1 spans 22-245 (VIGGTECKPH…YRPWINKILK (224 aa)). An intrachain disulfide couples Cys51 to Cys67. The active-site Charge relay system is His66. Asn103 carries N-linked (GlcNAc...) asparagine glycosylation. The active-site Charge relay system is the Asp110. Asn121 carries N-linked (GlcNAc...) asparagine glycosylation. Cystine bridges form between Cys144–Cys209 and Cys175–Cys188. Ser203 serves as the catalytic Charge relay system.

It belongs to the peptidase S1 family. Granzyme subfamily.

The protein localises to the secreted. It is found in the cytoplasmic granule. The catalysed reaction is Preferential cleavage: Phe-|-Xaa &gt; Tyr-|-Xaa &gt; Trp-|-Xaa &gt; Leu-|-Xaa.. In terms of biological role, major secreted protease of mast cells with suspected roles in vasoactive peptide generation, extracellular matrix degradation, and regulation of gland secretion. This is Chymase from Cavia porcellus (Guinea pig).